The chain runs to 229 residues: 2-C-methyl-D-erythritol 4-phosphate cytidylyltransferase (229 aa).

The protein belongs to the IspD/TarI cytidylyltransferase family. IspD subfamily.

It carries out the reaction 2-C-methyl-D-erythritol 4-phosphate + CTP + H(+) = 4-CDP-2-C-methyl-D-erythritol + diphosphate. Its pathway is isoprenoid biosynthesis; isopentenyl diphosphate biosynthesis via DXP pathway; isopentenyl diphosphate from 1-deoxy-D-xylulose 5-phosphate: step 2/6. Its function is as follows. Catalyzes the formation of 4-diphosphocytidyl-2-C-methyl-D-erythritol from CTP and 2-C-methyl-D-erythritol 4-phosphate (MEP). In Clostridium botulinum (strain 657 / Type Ba4), this protein is 2-C-methyl-D-erythritol 4-phosphate cytidylyltransferase.